The chain runs to 964 residues: SKI family transcriptional corepressor 1 (964 aa).

Disordered regions lie at residues 45 to 72 (TQLG…SSAL), 278 to 365 (RTFS…GGSA), 414 to 461 (AGEP…WGHQ), 525 to 587 (AGGG…RKSS), 610 to 768 (REAY…GAAK), and 794 to 842 (LCTP…EDGL). The span at 283-310 (QGGGGGGANSGSGGAGKGGAGGGGGPGC) shows a compositional bias: gly residues. The segment covering 345 to 355 (ALGLAAAASGP) has biased composition (low complexity). 2 stretches are compositionally biased toward gly residues: residues 356–365 (AGPGGPGGSA) and 417–440 (PKGG…GPGA). Residues 571 to 583 (SLGPLPPPPPPPA) are compositionally biased toward pro residues. A compositionally biased stretch (acidic residues) spans 652 to 661 (DTADEPEVDV). The segment covering 798 to 808 (ETHEPDKEDNH) has biased composition (basic and acidic residues). Residues 823-834 (DQRSVSQPSPAN) are compositionally biased toward polar residues. Positions 853-921 (EKDIENLARE…DTLCNELDQE (69 aa)) form a coiled coil.

The protein belongs to the SKI family. In terms of assembly, interacts with SMAD1, SMAD2 and SMAD3. Interacts with LBX1. As to expression, expressed in brain with higher levels in embryo than adult. Expressed by migratory precursors of Purkinje cells in the postnatal brain. Also expressed in adult testis.

It localises to the nucleus. Functionally, inhibits BMP signaling. Acts as a transcriptional corepressor of LBX1. This Mus musculus (Mouse) protein is SKI family transcriptional corepressor 1 (Skor1).